A 380-amino-acid polypeptide reads, in one-letter code: Erythronate-4-phosphate dehydrogenase (380 aa).

Positions 45 and 66 each coordinate substrate. NAD(+)-binding residues include D146 and T174. The active site involves R207. Residue D231 coordinates NAD(+). E236 is a catalytic residue. H253 serves as the catalytic Proton donor. Residue G256 coordinates NAD(+). Residue Y257 coordinates substrate.

This sequence belongs to the D-isomer specific 2-hydroxyacid dehydrogenase family. PdxB subfamily. In terms of assembly, homodimer.

It is found in the cytoplasm. The enzyme catalyses 4-phospho-D-erythronate + NAD(+) = (R)-3-hydroxy-2-oxo-4-phosphooxybutanoate + NADH + H(+). It functions in the pathway cofactor biosynthesis; pyridoxine 5'-phosphate biosynthesis; pyridoxine 5'-phosphate from D-erythrose 4-phosphate: step 2/5. Catalyzes the oxidation of erythronate-4-phosphate to 3-hydroxy-2-oxo-4-phosphonooxybutanoate. The sequence is that of Erythronate-4-phosphate dehydrogenase from Pseudomonas fluorescens (strain Pf0-1).